A 138-amino-acid chain; its full sequence is Ribulose bisphosphate carboxylase small subunit (138 aa).

The protein belongs to the RuBisCO small chain family. As to quaternary structure, heterohexadecamer of 8 large and 8 small subunits.

The protein localises to the plastid. Its subcellular location is the chloroplast. Its function is as follows. RuBisCO catalyzes two reactions: the carboxylation of D-ribulose 1,5-bisphosphate, the primary event in carbon dioxide fixation, as well as the oxidative fragmentation of the pentose substrate in the photorespiration process. Both reactions occur simultaneously and in competition at the same active site. Although the small subunit is not catalytic it is essential for maximal activity. In Pyropia katadae (Red alga), this protein is Ribulose bisphosphate carboxylase small subunit.